Here is a 295-residue protein sequence, read N- to C-terminus: F-box only protein 6 (295 aa).

The 48-residue stretch at 1 to 48 folds into the F-box domain; it reads MVHINELPENILLELFIHIPAPQLLRNCRLVCRLWRDLIDVVSLWKRK. The region spanning 69–250 is the FBA domain; sequence FYILCSLQRN…VTNSSIIISH (182 aa). Phosphoserine is present on residues serine 249 and serine 276. The residue at position 280 (threonine 280) is a Phosphothreonine.

Interacts with CHEK1 and CUL1. Part of a SCF (SKP1-cullin-F-box) protein ligase complex. Interacts with VCP. As to expression, present in liver and kidney (at protein level). Widely expressed.

The protein resides in the cytoplasm. Its pathway is protein modification; protein ubiquitination. Its function is as follows. Substrate-recognition component of some SCF (SKP1-CUL1-F-box protein)-type E3 ubiquitin ligase complexes. Involved in DNA damage response by specifically recognizing activated CHEK1 (phosphorylated on 'Ser-345'), promoting its ubiquitination and degradation. Ubiquitination of CHEK1 is required to ensure that activated CHEK1 does not accumulate as cells progress through S phase, or when replication forks encounter transient impediments during normal DNA replication. Involved in endoplasmic reticulum-associated degradation pathway (ERAD) for misfolded lumenal proteins by recognizing and binding sugar chains on unfolded glycoproteins that are retrotranslocated into the cytosol and promoting their ubiquitination and subsequent degradation. Able to recognize and bind denatured glycoproteins, which are modified with not only high-mannose but also complex-type oligosaccharides. Also recognizes sulfated glycans. The chain is F-box only protein 6 (Fbxo6) from Mus musculus (Mouse).